The following is a 540-amino-acid chain: Thiamine biosynthetic bifunctional enzyme (540 aa).

The tract at residues 1-238 (MVFTKEEVDY…LDATRYQFVE (238 aa)) is thiamine-phosphate synthase. 4-amino-2-methyl-5-(diphosphooxymethyl)pyrimidine contacts are provided by residues 43-47 (QIREK) and N75. The Mg(2+) site is built by D76 and D95. S114 provides a ligand contact to 4-amino-2-methyl-5-(diphosphooxymethyl)pyrimidine. 143 to 145 (TST) lines the 2-[(2R,5Z)-2-carboxy-4-methylthiazol-5(2H)-ylidene]ethyl phosphate pocket. Position 146 (K146) interacts with 4-amino-2-methyl-5-(diphosphooxymethyl)pyrimidine. Residues G181 and 209 to 210 (VS) contribute to the 2-[(2R,5Z)-2-carboxy-4-methylthiazol-5(2H)-ylidene]ethyl phosphate site. The tract at residues 239–540 (CELNNTFPTT…KWSASLKKFK (302 aa)) is hydroxyethylthiazole kinase. Residue M290 coordinates 5-(2-hydroxyethyl)-4-methylthiazole. ATP contacts are provided by K365 and T415. A 5-(2-hydroxyethyl)-4-methylthiazole-binding site is contributed by A462. Residue C465 is the Proton acceptor; for hydroxyethylthiazole kinase activity of the active site.

In the N-terminal section; belongs to the thiamine-phosphate synthase family. The protein in the C-terminal section; belongs to the Thz kinase family. Homooctamer. Requires Mg(2+) as cofactor.

It catalyses the reaction 2-[(2R,5Z)-2-carboxy-4-methylthiazol-5(2H)-ylidene]ethyl phosphate + 4-amino-2-methyl-5-(diphosphooxymethyl)pyrimidine + 2 H(+) = thiamine phosphate + CO2 + diphosphate. The enzyme catalyses 2-(2-carboxy-4-methylthiazol-5-yl)ethyl phosphate + 4-amino-2-methyl-5-(diphosphooxymethyl)pyrimidine + 2 H(+) = thiamine phosphate + CO2 + diphosphate. The catalysed reaction is 4-methyl-5-(2-phosphooxyethyl)-thiazole + 4-amino-2-methyl-5-(diphosphooxymethyl)pyrimidine + H(+) = thiamine phosphate + diphosphate. It carries out the reaction 5-(2-hydroxyethyl)-4-methylthiazole + ATP = 4-methyl-5-(2-phosphooxyethyl)-thiazole + ADP + H(+). It functions in the pathway cofactor biosynthesis; thiamine diphosphate biosynthesis; 4-methyl-5-(2-phosphoethyl)-thiazole from 5-(2-hydroxyethyl)-4-methylthiazole: step 1/1. The protein operates within cofactor biosynthesis; thiamine diphosphate biosynthesis; thiamine phosphate from 4-amino-2-methyl-5-diphosphomethylpyrimidine and 4-methyl-5-(2-phosphoethyl)-thiazole: step 1/1. Essential for thiamine biosynthesis. The kinase activity is involved in the salvage synthesis of TH-P from the thiazole. In terms of biological role, condenses 4-methyl-5-(beta-hydroxyethyl)thiazole monophosphate (THZ-P) and 2-methyl-4-amino-5-hydroxymethyl pyrimidine pyrophosphate (HMP-PP) to form thiamine monophosphate (TMP). The chain is Thiamine biosynthetic bifunctional enzyme (THI6) from Saccharomyces cerevisiae (strain ATCC 204508 / S288c) (Baker's yeast).